Here is a 294-residue protein sequence, read N- to C-terminus: Eukaryotic translation initiation factor 3 subunit G (294 aa).

2 disordered regions span residues 1–43 and 160–211; these read MPSA…ENKI and EDDG…RDET. Positions 194-211 are enriched in basic and acidic residues; it reads GANRRGETMPSRSQRDET. In terms of domain architecture, RRM spans 212–290; sequence ATIRVTNLSE…LILNVEWAKP (79 aa).

This sequence belongs to the eIF-3 subunit G family. As to quaternary structure, component of the eukaryotic translation initiation factor 3 (eIF-3) complex.

It localises to the cytoplasm. Functionally, RNA-binding component of the eukaryotic translation initiation factor 3 (eIF-3) complex, which is involved in protein synthesis of a specialized repertoire of mRNAs and, together with other initiation factors, stimulates binding of mRNA and methionyl-tRNAi to the 40S ribosome. The eIF-3 complex specifically targets and initiates translation of a subset of mRNAs involved in cell proliferation. This subunit can bind 18S rRNA. The protein is Eukaryotic translation initiation factor 3 subunit G of Nematostella vectensis (Starlet sea anemone).